Here is a 237-residue protein sequence, read N- to C-terminus: Large ribosomal subunit protein uL1 (237 aa).

This sequence belongs to the universal ribosomal protein uL1 family. In terms of assembly, part of the 50S ribosomal subunit.

Its function is as follows. Binds directly to 23S rRNA. The L1 stalk is quite mobile in the ribosome, and is involved in E site tRNA release. Functionally, protein L1 is also a translational repressor protein, it controls the translation of the L11 operon by binding to its mRNA. The sequence is that of Large ribosomal subunit protein uL1 from Synechococcus elongatus (strain ATCC 33912 / PCC 7942 / FACHB-805) (Anacystis nidulans R2).